Reading from the N-terminus, the 281-residue chain is Proteasome subunit beta (281 aa).

A propeptide spans 1 to 53 (removed in mature form; by autocatalysis); the sequence is MEANTRSTGRLPAAFLTPGSSSFMDFLSDHQPELLPGKRQLPPTQGVIEAPHG. Catalysis depends on Thr54, which acts as the Nucleophile.

It belongs to the peptidase T1B family. In terms of assembly, the 20S proteasome core is composed of 14 alpha and 14 beta subunits that assemble into four stacked heptameric rings, resulting in a barrel-shaped structure. The two inner rings, each composed of seven catalytic beta subunits, are sandwiched by two outer rings, each composed of seven alpha subunits. The catalytic chamber with the active sites is on the inside of the barrel. Has a gated structure, the ends of the cylinder being occluded by the N-termini of the alpha-subunits. Is capped by the proteasome-associated ATPase, ARC.

Its subcellular location is the cytoplasm. It catalyses the reaction Cleavage of peptide bonds with very broad specificity.. The protein operates within protein degradation; proteasomal Pup-dependent pathway. Its activity is regulated as follows. The formation of the proteasomal ATPase ARC-20S proteasome complex, likely via the docking of the C-termini of ARC into the intersubunit pockets in the alpha-rings, may trigger opening of the gate for substrate entry. Interconversion between the open-gate and close-gate conformations leads to a dynamic regulation of the 20S proteasome proteolysis activity. In terms of biological role, component of the proteasome core, a large protease complex with broad specificity involved in protein degradation. This chain is Proteasome subunit beta, found in Streptomyces scabiei (strain 87.22).